The chain runs to 213 residues: V-type ATP synthase subunit D (213 aa).

Belongs to the V-ATPase D subunit family.

Its function is as follows. Produces ATP from ADP in the presence of a proton gradient across the membrane. The polypeptide is V-type ATP synthase subunit D (Clostridium botulinum (strain Alaska E43 / Type E3)).